The chain runs to 337 residues: GTP 3',8-cyclase (337 aa).

In terms of domain architecture, Radical SAM core spans Pro-17–Lys-243. Position 26 (Arg-26) interacts with GTP. Cys-33 and Cys-37 together coordinate [4Fe-4S] cluster. Tyr-39 contacts S-adenosyl-L-methionine. Position 40 (Cys-40) interacts with [4Fe-4S] cluster. Arg-76 contacts GTP. Gly-80 contributes to the S-adenosyl-L-methionine binding site. Residue Thr-107 participates in GTP binding. Ser-131 lines the S-adenosyl-L-methionine pocket. Lys-168 is a GTP binding site. Residue Met-202 participates in S-adenosyl-L-methionine binding. [4Fe-4S] cluster-binding residues include Cys-265 and Cys-268. Residue Arg-270–Arg-272 coordinates GTP. A [4Fe-4S] cluster-binding site is contributed by Cys-282.

Belongs to the radical SAM superfamily. MoaA family. As to quaternary structure, monomer and homodimer. It depends on [4Fe-4S] cluster as a cofactor.

It carries out the reaction GTP + AH2 + S-adenosyl-L-methionine = (8S)-3',8-cyclo-7,8-dihydroguanosine 5'-triphosphate + 5'-deoxyadenosine + L-methionine + A + H(+). It functions in the pathway cofactor biosynthesis; molybdopterin biosynthesis. Functionally, catalyzes the cyclization of GTP to (8S)-3',8-cyclo-7,8-dihydroguanosine 5'-triphosphate. In Haemophilus influenzae (strain 86-028NP), this protein is GTP 3',8-cyclase.